An 867-amino-acid chain; its full sequence is Alanine--tRNA ligase (867 aa).

Residues histidine 554, histidine 558, cysteine 656, and histidine 660 each coordinate Zn(2+).

The protein belongs to the class-II aminoacyl-tRNA synthetase family. Zn(2+) serves as cofactor.

The protein resides in the cytoplasm. The enzyme catalyses tRNA(Ala) + L-alanine + ATP = L-alanyl-tRNA(Ala) + AMP + diphosphate. Functionally, catalyzes the attachment of alanine to tRNA(Ala) in a two-step reaction: alanine is first activated by ATP to form Ala-AMP and then transferred to the acceptor end of tRNA(Ala). Also edits incorrectly charged Ser-tRNA(Ala) and Gly-tRNA(Ala) via its editing domain. The protein is Alanine--tRNA ligase of Methylococcus capsulatus (strain ATCC 33009 / NCIMB 11132 / Bath).